The sequence spans 123 residues: uncharacterized protein (123 aa).

The N-terminal stretch at methionine 1–alanine 19 is a signal peptide. A lipid anchor (N-palmitoyl cysteine) is attached at cysteine 20. A lipid anchor (S-diacylglycerol cysteine) is attached at cysteine 20.

This sequence belongs to the MG439/MG440 family.

The protein resides in the cell membrane. This is an uncharacterized protein from Mycoplasma pneumoniae (strain ATCC 29342 / M129 / Subtype 1) (Mycoplasmoides pneumoniae).